Consider the following 345-residue polypeptide: WD40 repeat protein poxJ (345 aa).

WD repeat units follow at residues 15–49 (ANPP…YDVS), 59–100 (LFNF…EAQQ), 101–146 (VAAH…PLAT), and 250–284 (VNDV…RLKS).

It belongs to the WD repeat rae1 family.

It participates in secondary metabolite biosynthesis. Functionally, WD40 repeat protein; part of the gene cluster that mediates the biosynthesis of oxaleimides, cytotoxic compounds containing an unusual disubstituted succinimide moiety. The first step of the pathway is provided by the HR-PKS poxF that serves in a new mode of collaborative biosynthesis with the PKS-NRPS poxE, by providing the olefin containing amino acid substrate via the synthesis of an ACP-bound dec-4-enoate. The cytochrome P450 monooxygenase poxM-catalyzed oxidation at the alpha-position creates the enzyme-bound 2-hydroxydec-4-enoyl-ACP thioester, which may be prone to spontaneous hydrolysis to yield 2-hydroxydec-4-enoic acid due to increased electrophilicity of the carbonyl. 2-hydroxydec-4-enoic acid can then be further oxidized by poxM to yield the alpha-ketoacid 2-oxodec-4-enoicacid, which is reductively aminated by the aminotransferase poxL to yield (S,E)-2-aminodec-4-enoic acid. The Hybrid PKS-NRPS synthetase poxE then performs condensation between the octaketide product of its PKS modules and the amino group of (S,E)-2-aminodec-4-enoic acid which is activated and incorporated by the adenylation domain. The resulting aminoacyl product can be cyclized by the Diels-Alderase PoxQ and reductively released by the reductive (R) domain of poxE to yield an aldehyde intermediate. The released aldehyde is then substrate for a Knoevenagel condensation by the hydrolyase poxO followed by an oxidation at the 5-position of the pyrrolidone ring. The presence of the olefin from the amino acid building block allows for migration of the substituted allyl group to occur. This allylic transposition reaction takes place in a conjugate addition, semipinacol-like fashion to yield a succinimide intermediate. Iterative two-electron oxidations of the C7 methyl of the succinimide intermediate to the carboxylic acid can be catalyzed by one of two remaining cytochrome P450 monooxygenasess poxC or poxD to yield oxaleimide A. Subsequent oxidation yields the maleimide scaffold oxaleimide I. Both oxaleimide A and oxaleimide I can undergo oxidative modifications in the decalin ring to yield the series of products oxaleimides B to H. This is WD40 repeat protein poxJ from Penicillium oxalicum (strain 114-2 / CGMCC 5302) (Penicillium decumbens).